We begin with the raw amino-acid sequence, 215 residues long: Golgi-associated RAB2 interactor protein 5A (215 aa).

Disordered regions lie at residues 1–20 and 174–215; these read MKRG…AGPG and QDYS…LWGL. Acidic residues predominate over residues 178-191; the sequence is ALEDDEDDDEDEDR.

Belongs to the GARIN family. As to quaternary structure, interacts (via N-terminus) with RAB2B (in GTP-bound form).

It is found in the golgi apparatus. RAB2B effector protein which promotes cytosolic DNA-induced innate immune responses. Regulates IFN responses against DNA viruses by regulating the CGAS-STING signaling axis. The polypeptide is Golgi-associated RAB2 interactor protein 5A (GARIN5A) (Bos taurus (Bovine)).